A 608-amino-acid polypeptide reads, in one-letter code: MLRRIVNTGTKRLFRVPPRSSALCFSRRLSDQTKEVYTKINDTKDPARNQFFQYTWGSWMKNDKLERARRQTRFSIEGLSKFAKDFKPQDAALGKPEHLTNGTVALKNNWTKEILGETGHDVKSIASIHEGKHHRIYKVTLANDRQLVLRIPYRLESDYAIENKINSEVATLDFLALKLKLNVPRVLAYGPTRTNILQTPFILMEYIEGDLLMKQWNPLVPDSETSEEELKKVIDPIMEFQDKLLSVTFNRFGSLYFFDDVSAANQKVVPYDEEDNLLKDRWRIGPSTESVFSKNKKQLASQKISQFNGPWDSVEKMLKDLAEVQVESLRFRLGLAQADSSNQVEDVDQLKKQIQTFENFKIISDKLLNPSSPAIKNVEELFKPRLFVPDLDPLNVIVEQKSSKPFFIDFEHTVIKPFILASYPAFVAYQGTKLYNLEEEIPGFKDMDDVEKQQYEFMYYKTRNERLWEFALNNKRHDLIAVASPHIKLLKAPYLQVVNCKTDKDFMFIENAIIQLQAMWEAYVANQICNSTTPEFPIEYTAEYLDEHQSDLENYQLEVASTPFAATGGWVPQDMFDVLKEQNILVEDENGNYKIEADAALKNPPKDP.

A mitochondrion-targeting transit peptide spans 1–21; it reads MLRRIVNTGTKRLFRVPPRSS.

The protein belongs to the AIM9 family.

It is found in the mitochondrion. The sequence is that of Altered inheritance of mitochondria protein 9, mitochondrial (AIM9) from Clavispora lusitaniae (strain ATCC 42720) (Yeast).